A 120-amino-acid chain; its full sequence is NAD(P)H-quinone oxidoreductase subunit 3, chloroplastic (120 aa).

Transmembrane regions (helical) follow at residues 7-27, 64-84, and 89-109; these read YDYFFVFLLIISFFSILIFSL, MFALVFVIFDVETVFLYPWAM, and FGISSFIEALIFILILIIGLV.

The protein belongs to the complex I subunit 3 family. As to quaternary structure, NDH is composed of at least 16 different subunits, 5 of which are encoded in the nucleus.

The protein localises to the plastid. Its subcellular location is the chloroplast thylakoid membrane. It catalyses the reaction a plastoquinone + NADH + (n+1) H(+)(in) = a plastoquinol + NAD(+) + n H(+)(out). The catalysed reaction is a plastoquinone + NADPH + (n+1) H(+)(in) = a plastoquinol + NADP(+) + n H(+)(out). Its function is as follows. NDH shuttles electrons from NAD(P)H:plastoquinone, via FMN and iron-sulfur (Fe-S) centers, to quinones in the photosynthetic chain and possibly in a chloroplast respiratory chain. The immediate electron acceptor for the enzyme in this species is believed to be plastoquinone. Couples the redox reaction to proton translocation, and thus conserves the redox energy in a proton gradient. This chain is NAD(P)H-quinone oxidoreductase subunit 3, chloroplastic, found in Marchantia polymorpha (Common liverwort).